The primary structure comprises 388 residues: 1-deoxy-D-xylulose 5-phosphate reductoisomerase (388 aa).

NADPH contacts are provided by Thr10, Gly11, Ser12, Ile13, Asn37, and Asn121. Lys122 is a 1-deoxy-D-xylulose 5-phosphate binding site. NADPH is bound at residue Glu123. A Mn(2+)-binding site is contributed by Asp147. 1-deoxy-D-xylulose 5-phosphate-binding residues include Ser148, Glu149, Ser173, and His196. Glu149 is a binding site for Mn(2+). Gly202 lines the NADPH pocket. Ser209, Asn214, Lys215, and Glu218 together coordinate 1-deoxy-D-xylulose 5-phosphate. Position 218 (Glu218) interacts with Mn(2+).

Belongs to the DXR family. The cofactor is Mg(2+). Requires Mn(2+) as cofactor.

It catalyses the reaction 2-C-methyl-D-erythritol 4-phosphate + NADP(+) = 1-deoxy-D-xylulose 5-phosphate + NADPH + H(+). The protein operates within isoprenoid biosynthesis; isopentenyl diphosphate biosynthesis via DXP pathway; isopentenyl diphosphate from 1-deoxy-D-xylulose 5-phosphate: step 1/6. In terms of biological role, catalyzes the NADPH-dependent rearrangement and reduction of 1-deoxy-D-xylulose-5-phosphate (DXP) to 2-C-methyl-D-erythritol 4-phosphate (MEP). This is 1-deoxy-D-xylulose 5-phosphate reductoisomerase from Lachnoclostridium phytofermentans (strain ATCC 700394 / DSM 18823 / ISDg) (Clostridium phytofermentans).